Here is a 319-residue protein sequence, read N- to C-terminus: tRNA (guanine-N(7)-)-methyltransferase (319 aa).

Glutamate 28, glutamate 51, and aspartate 75 together coordinate S-adenosyl-L-methionine. Residues aspartate 134 and 167–170 contribute to the substrate site; that span reads TKYE.

This sequence belongs to the class I-like SAM-binding methyltransferase superfamily. TrmB family.

It catalyses the reaction guanosine(46) in tRNA + S-adenosyl-L-methionine = N(7)-methylguanosine(46) in tRNA + S-adenosyl-L-homocysteine. Its pathway is tRNA modification; N(7)-methylguanine-tRNA biosynthesis. Catalyzes the formation of N(7)-methylguanine at position 46 (m7G46) in tRNA. The chain is tRNA (guanine-N(7)-)-methyltransferase from Coprothermobacter proteolyticus (strain ATCC 35245 / DSM 5265 / OCM 4 / BT).